A 130-amino-acid chain; its full sequence is Holo-[acyl-carrier-protein] synthase (130 aa).

Mg(2+) is bound by residues aspartate 9 and glutamate 58.

Belongs to the P-Pant transferase superfamily. AcpS family. Mg(2+) serves as cofactor.

Its subcellular location is the cytoplasm. It catalyses the reaction apo-[ACP] + CoA = holo-[ACP] + adenosine 3',5'-bisphosphate + H(+). Transfers the 4'-phosphopantetheine moiety from coenzyme A to a Ser of acyl-carrier-protein. The sequence is that of Holo-[acyl-carrier-protein] synthase from Mycobacterium tuberculosis (strain CDC 1551 / Oshkosh).